The primary structure comprises 2312 residues: Protein Ycf2 (2312 aa).

Position 1630-1637 (1630-1637) interacts with ATP; it reads GSIGTGRS.

This sequence belongs to the Ycf2 family.

The protein resides in the plastid. The protein localises to the chloroplast stroma. Its function is as follows. Probable ATPase of unknown function. Its presence in a non-photosynthetic plant (Epifagus virginiana) and experiments in tobacco indicate that it has an essential function which is probably not related to photosynthesis. This chain is Protein Ycf2, found in Manihot esculenta (Cassava).